Here is a 147-residue protein sequence, read N- to C-terminus: Large ribosomal subunit protein uL13 (147 aa).

It belongs to the universal ribosomal protein uL13 family. As to quaternary structure, part of the 50S ribosomal subunit.

In terms of biological role, this protein is one of the early assembly proteins of the 50S ribosomal subunit, although it is not seen to bind rRNA by itself. It is important during the early stages of 50S assembly. The polypeptide is Large ribosomal subunit protein uL13 (Lactobacillus johnsonii (strain CNCM I-12250 / La1 / NCC 533)).